The primary structure comprises 495 residues: SH2 domain-containing adapter protein E (495 aa).

3 disordered regions span residues 51-190 (TVSE…DKGK), 203-233 (DYADPYDAKRTKGQRDAERVGENDGYMEPYD), and 256-327 (LLDS…EYEQ). Serine 107 carries the post-translational modification Phosphoserine. Positions 135 to 144 (TKSSGCSTYI) are enriched in polar residues. Over residues 148–157 (IKVDTQEKNG) the composition is skewed to basic and acidic residues. Positions 162–181 (PSSSSSSSSSSSSASSSPSS) are enriched in low complexity. 2 stretches are compositionally biased toward basic and acidic residues: residues 208 to 224 (YDAKRTKGQRDAERVGE) and 301 to 327 (PRAEGKARPPDSRLPENDERPAAEYEQ). One can recognise an SH2 domain in the interval 395 to 490 (WYHGAISRAE…AEHMTLLYPV (96 aa)).

The protein is SH2 domain-containing adapter protein E (SHE) of Homo sapiens (Human).